Consider the following 231-residue polypeptide: Ribonuclease 3 (231 aa).

Positions 5-134 (QEKLKNDYGL…FLGALFIDQG (130 aa)) constitute an RNase III domain. Glutamate 47 lines the Mg(2+) pocket. The active site involves aspartate 51. Mg(2+)-binding residues include asparagine 120 and glutamate 123. The active site involves glutamate 123. One can recognise a DRBM domain in the interval 160–229 (DYKTELQEVL…AENAIKGQNH (70 aa)).

This sequence belongs to the ribonuclease III family. As to quaternary structure, homodimer. Mg(2+) serves as cofactor.

Its subcellular location is the cytoplasm. The enzyme catalyses Endonucleolytic cleavage to 5'-phosphomonoester.. Its function is as follows. Digests double-stranded RNA. Involved in the processing of primary rRNA transcript to yield the immediate precursors to the large and small rRNAs (23S and 16S). Processes some mRNAs, and tRNAs when they are encoded in the rRNA operon. Processes pre-crRNA and tracrRNA of type II CRISPR loci if present in the organism. In Lactococcus lactis subsp. cremoris (strain SK11), this protein is Ribonuclease 3.